The sequence spans 447 residues: Phosphoglucosamine mutase (447 aa).

The active-site Phosphoserine intermediate is S101. 4 residues coordinate Mg(2+): S101, D242, D244, and D246. S101 carries the post-translational modification Phosphoserine.

The protein belongs to the phosphohexose mutase family. The cofactor is Mg(2+). In terms of processing, activated by phosphorylation.

It carries out the reaction alpha-D-glucosamine 1-phosphate = D-glucosamine 6-phosphate. Catalyzes the conversion of glucosamine-6-phosphate to glucosamine-1-phosphate. In Methylobacterium radiotolerans (strain ATCC 27329 / DSM 1819 / JCM 2831 / NBRC 15690 / NCIMB 10815 / 0-1), this protein is Phosphoglucosamine mutase.